A 431-amino-acid polypeptide reads, in one-letter code: Trigger factor (431 aa).

Residues 165 to 250 (GDTVVIDFDG…IHELKRKELP (86 aa)) enclose the PPIase FKBP-type domain.

Belongs to the FKBP-type PPIase family. Tig subfamily.

Its subcellular location is the cytoplasm. The enzyme catalyses [protein]-peptidylproline (omega=180) = [protein]-peptidylproline (omega=0). Its function is as follows. Involved in protein export. Acts as a chaperone by maintaining the newly synthesized protein in an open conformation. Functions as a peptidyl-prolyl cis-trans isomerase. The sequence is that of Trigger factor from Leuconostoc mesenteroides subsp. mesenteroides (strain ATCC 8293 / DSM 20343 / BCRC 11652 / CCM 1803 / JCM 6124 / NCDO 523 / NBRC 100496 / NCIMB 8023 / NCTC 12954 / NRRL B-1118 / 37Y).